The primary structure comprises 1088 residues: Neural cell adhesion molecule 1-A (1088 aa).

An N-terminal signal peptide occupies residues 1-19 (MLHIKDLIWTLYFIGTAVA). 5 consecutive Ig-like C2-type domains span residues 20–108 (LEVN…GTVN), 113–202 (QKLT…KDIQ), 209–294 (PTIQ…AEAT), 303–397 (PKIT…FEVQ), and 400–484 (PKIR…HEFS). Topologically, residues 20–705 (LEVNIVPDQG…TASAGTGLGT (686 aa)) are extracellular. Intrachain disulfides connect Cys-41–Cys-93 and Cys-136–Cys-186. Asn-82 is a glycosylation site (N-linked (GlcNAc...) asparagine). Heparin contacts are provided by residues 149–153 (RHKGK) and 158–162 (KKDVR). A glycan (N-linked (GlcNAc...) asparagine) is linked at Asn-219. Cys-232 and Cys-282 are disulfide-bonded. N-linked (GlcNAc...) asparagine glycans are attached at residues Asn-310, Asn-341, Asn-417, Asn-443, and Asn-472. The cysteines at positions 323 and 379 are disulfide-linked. Cys-420 and Cys-473 are joined by a disulfide. Fibronectin type-III domains follow at residues 493-592 (TPSS…TQPV) and 594-690 (EPSA…TAKP). A helical membrane pass occupies residues 706–723 (GAIVGILIVIFVLLLVVV). Residues 724–1088 (DVTCFFLNKC…TQTNANESKA (365 aa)) are Cytoplasmic-facing. Residues 758-784 (EGKAAFSKDESKEPIVEVRTEEERTPN) show a composition bias toward basic and acidic residues. 3 disordered regions span residues 758-802 (EGKA…LTEP), 829-1000 (FATA…DGGT), and 1024-1088 (VASG…ESKA). Low complexity-rich tracts occupy residues 835-847 (SPTSETTTLTSST), 854-875 (APDSNTIQSIQATPSKAEAPTT), and 913-936 (PSAATSAAEPPTVIIKPVTTVPPN). A compositionally biased stretch (polar residues) spans 965 to 974 (QPSTVKNPTE). Residues 1046-1064 (AKTEKTQVEEKSKPEEIDV) show a composition bias toward basic and acidic residues. Residues 1076 to 1088 (NEATQTNANESKA) are compositionally biased toward polar residues.

In terms of processing, polysialylated by ST8SIA2 and ST8SIA4. Polysialylation modulates cell interactions by confering both attractive and repulsive properties that are highly regulated by ST8SIA2 and ST8SIA4. Polysialylation is formed on a-2,3-linked sialic acid of core glycans. As to expression, expressed in neuron and in presumptive neural tissue.

Its subcellular location is the cell membrane. Functionally, this protein is a cell adhesion molecule involved in neuron-neuron adhesion, neurite fasciculation, outgrowth of neurites, etc. This is Neural cell adhesion molecule 1-A from Xenopus laevis (African clawed frog).